The sequence spans 272 residues: uncharacterized protein (272 aa).

Transmembrane regions (helical) follow at residues 9–29 (PVGF…GSGV), 38–58 (LTSF…SFPP), 154–174 (AGEF…VLML), and 188–208 (AIAL…FNPI). Topologically, residues 209–272 (AAKLEEKTES…KTKKGSVHEA (64 aa)) are cytoplasmic.

This sequence belongs to the MotA family.

The protein localises to the cell membrane. Functionally, may be involved in some transport function. This is an uncharacterized protein from Bacillus subtilis (strain 168).